An 890-amino-acid chain; its full sequence is MQTHEINQRFTEHFRKAGHTVVPSASLILDDPTLLFVNAGMVQFKPYFLGDAPAPYPRATSIQKCVRTGDIDEVGKTTRHNTFFQMAGNFSFGDYFKEGAMEHAWGLLTSSQADGGYGFDPERLWVTVFEKDEEAAALWQKVTGIPAERIQVRDAKDNYWDMGVPGPGGPCSEIYYDRGPKYGREGGPVVDEDRYIEIWNLVFMQDIRGELPPKEGHPPIGELPTKNIDTGMGVERVACLLQGVENVYETDLVRPVIAKAEELSGRSYGANHEDDVRFRVIADHARSGVMLVGDGVTPGNEARGYVLRRLLRRIIRSTRLLGVHEPVLGEFAAVVRDAMAPSYPELVTEFDRIDSVMRNEEDAFLSTLTAGSKIFDLAVADTKKAGGTQLAGAKAFQLHDTYGFPIDLTLEMASEQGLSVDEHGFRELMSEQRRRAKEDAKSRKSGHGDLSTYRTLLDQHGTTEFLGYTDLQAQSRVLGLLVDGVPAKSAAAGTEVELILDRTPFYAEGGGQIADTGRLTGPGVEVEVHDVQRAVPGLFVHRAKVTAGELGVDTSLEAAVDSKRRHAIERSHSATHLVHAAVRSAYGKRAAQAGSLNSPGRMRFDFTAPAAVSGAVLGGVEEEVNSYLQNDVEVQSYTTTMDRAMELGAVALFGEKYGDQVRVVDMGDYSRELCGGTHVGRIGQLGVVKLVADSSVGSGVHRVEALVGMDAMRHISKEHLLVSRLAEQFKVPAEELPERIAGVVSRLRSAEKELEQLRVAQVLQSAGELAGKGTDVHGVTLVAEQVPDGVDGGALRALAGEVRGRLGSRPAVVALFSADGDKVSFVVGVNTPAQDLGLKAGKLVPSFAAEVGGRGGGKPDMAQGGGSNPAGITAAIAALRTGLDQAVARG.

His572, His576, Cys674, and His678 together coordinate Zn(2+).

It belongs to the class-II aminoacyl-tRNA synthetase family. It depends on Zn(2+) as a cofactor.

It localises to the cytoplasm. The enzyme catalyses tRNA(Ala) + L-alanine + ATP = L-alanyl-tRNA(Ala) + AMP + diphosphate. Functionally, catalyzes the attachment of alanine to tRNA(Ala) in a two-step reaction: alanine is first activated by ATP to form Ala-AMP and then transferred to the acceptor end of tRNA(Ala). Also edits incorrectly charged Ser-tRNA(Ala) and Gly-tRNA(Ala) via its editing domain. This is Alanine--tRNA ligase from Saccharopolyspora erythraea (strain ATCC 11635 / DSM 40517 / JCM 4748 / NBRC 13426 / NCIMB 8594 / NRRL 2338).